A 62-amino-acid polypeptide reads, in one-letter code: MARYRRHSRSRSRSRYRRRRRRRSRHHNRRTYRRSRRHSRRRRGRRRGYSRRRYSRRGRRRY.

The tract at residues 1 to 62 (MARYRRHSRS…RYSRRGRRRY (62 aa)) is disordered.

Belongs to the protamine P1 family. As to expression, testis.

It localises to the nucleus. Its subcellular location is the chromosome. Functionally, protamines substitute for histones in the chromatin of sperm during the haploid phase of spermatogenesis. They compact sperm DNA into a highly condensed, stable and inactive complex. This is Sperm protamine P1 (PRM1) from Antechinomys laniger (Eastern jerboa marsupial).